The chain runs to 492 residues: N-succinylglutamate 5-semialdehyde dehydrogenase (492 aa).

220 to 225 (GSANTG) contacts NAD(+). Active-site residues include Glu-243 and Cys-277.

This sequence belongs to the aldehyde dehydrogenase family. AstD subfamily.

The catalysed reaction is N-succinyl-L-glutamate 5-semialdehyde + NAD(+) + H2O = N-succinyl-L-glutamate + NADH + 2 H(+). The protein operates within amino-acid degradation; L-arginine degradation via AST pathway; L-glutamate and succinate from L-arginine: step 4/5. Catalyzes the NAD-dependent reduction of succinylglutamate semialdehyde into succinylglutamate. The sequence is that of N-succinylglutamate 5-semialdehyde dehydrogenase from Escherichia coli O139:H28 (strain E24377A / ETEC).